The chain runs to 358 residues: Homoserine O-succinyltransferase (358 aa).

The active-site Acyl-thioester intermediate is Cys146. The substrate site is built by Lys167 and Ser196. Catalysis depends on His239, which acts as the Proton acceptor. The active site involves Glu241. Residue Arg253 coordinates substrate.

It belongs to the MetA family.

It is found in the cytoplasm. It catalyses the reaction L-homoserine + succinyl-CoA = O-succinyl-L-homoserine + CoA. It participates in amino-acid biosynthesis; L-methionine biosynthesis via de novo pathway; O-succinyl-L-homoserine from L-homoserine: step 1/1. Functionally, transfers a succinyl group from succinyl-CoA to L-homoserine, forming succinyl-L-homoserine. The polypeptide is Homoserine O-succinyltransferase (Nitrosococcus oceani (strain ATCC 19707 / BCRC 17464 / JCM 30415 / NCIMB 11848 / C-107)).